The following is a 547-amino-acid chain: Chaperonin GroEL (547 aa).

ATP-binding positions include 30 to 33, lysine 51, 87 to 91, glycine 415, and aspartate 496; these read TLGP and DGTTT.

It belongs to the chaperonin (HSP60) family. Forms a cylinder of 14 subunits composed of two heptameric rings stacked back-to-back. Interacts with the co-chaperonin GroES.

It localises to the cytoplasm. The catalysed reaction is ATP + H2O + a folded polypeptide = ADP + phosphate + an unfolded polypeptide.. Its function is as follows. Together with its co-chaperonin GroES, plays an essential role in assisting protein folding. The GroEL-GroES system forms a nano-cage that allows encapsulation of the non-native substrate proteins and provides a physical environment optimized to promote and accelerate protein folding. The sequence is that of Chaperonin GroEL from Actinobacillus pleuropneumoniae serotype 7 (strain AP76).